The following is a 263-amino-acid chain: Pro-opiomelanocortin (263 aa).

Positions 1–26 (MLQPVWHACILAILGVFIFHVGEVRS) are cleaved as a signal peptide. Position 27 is a pyrrolidone carboxylic acid (glutamine 27). Residue phenylalanine 87 is modified to Phenylalanine amide. N-linked (GlcNAc...) asparagine glycosylation occurs at asparagine 91. Positions 107-141 (EDIANYPILNLFLGSDNQNTQEGIMEDDALDRQDS) are excised as a propeptide. Valine amide is present on valine 156.

The protein belongs to the POMC family. Post-translationally, specific enzymatic cleavages at paired basic residues yield the different active peptides.

It is found in the secreted. Functionally, stimulates the adrenal glands to release cortisol. Anorexigenic peptide. Increases the pigmentation of skin by increasing melanin production in melanocytes. Its function is as follows. Increases the pigmentation of skin by increasing melanin production in melanocytes. In terms of biological role, endogenous orexigenic opiate. Functionally, endogenous opiate. This Aquarana catesbeiana (American bullfrog) protein is Pro-opiomelanocortin (pomc).